The primary structure comprises 77 residues: Cell division topological specificity factor (77 aa).

The protein belongs to the MinE family.

Its function is as follows. Prevents the cell division inhibition by proteins MinC and MinD at internal division sites while permitting inhibition at polar sites. This ensures cell division at the proper site by restricting the formation of a division septum at the midpoint of the long axis of the cell. This Nautilia profundicola (strain ATCC BAA-1463 / DSM 18972 / AmH) protein is Cell division topological specificity factor.